The primary structure comprises 273 residues: Nucleotide-binding protein TTHA0319 (273 aa).

An ATP-binding site is contributed by 8–15; that stretch reads GLSGAGKT. 57–60 is a GTP binding site; sequence DARA.

This sequence belongs to the RapZ-like family.

Displays ATPase and GTPase activities. This chain is Nucleotide-binding protein TTHA0319, found in Thermus thermophilus (strain ATCC 27634 / DSM 579 / HB8).